Consider the following 118-residue polypeptide: Vesicle-associated membrane protein 1 (118 aa).

Residues 1-15 (MSAPAQPPAEGTEGA) are compositionally biased toward low complexity. The disordered stretch occupies residues 1–36 (MSAPAQPPAEGTEGAAPGGGPPGPPPNMTSNRRLQQ). Topologically, residues 1 to 96 (MSAPAQPPAE…KRKYWWKNCK (96 aa)) are cytoplasmic. One can recognise a v-SNARE coiled-coil homology domain in the interval 33 to 93 (RLQQTQAQVE…AKLKRKYWWK (61 aa)). At S63 the chain carries Phosphoserine. A helical; Anchor for type IV membrane protein transmembrane segment spans residues 97 to 116 (MMIMLGAICAIIVVVIVIYF). Over 117–118 (FT) the chain is Vesicular.

This sequence belongs to the synaptobrevin family. As to quaternary structure, interacts with VAPA and VAPB. Post-translationally, (Microbial infection) Targeted and hydrolyzed by C.botulinum neurotoxin type X (BoNT/X) which hydrolyzes the 68-Arg-|-Ala-69 bond and probably inhibits neurotransmitter release. It remains unknown whether BoNT/X is ever produced, or what organisms it targets. As to expression, highly expressed in the zona incerta and rostral periolivary region of the brain. Other neuroanatomical regions show negligible expression. Expressed in the retina, expression observed in the outer segments of the photoreceptors, in the outer and inner plexiform layers, and in a subset of ganglion cells.

The protein localises to the cytoplasmic vesicle. It is found in the secretory vesicle. It localises to the synaptic vesicle membrane. The protein resides in the synapse. Its subcellular location is the synaptosome. The protein localises to the cytoplasmic vesicle membrane. In terms of biological role, involved in the targeting and/or fusion of transport vesicles to their target membrane. The chain is Vesicle-associated membrane protein 1 (Vamp1) from Mus musculus (Mouse).